The sequence spans 165 residues: Large ribosomal subunit protein uL10 (165 aa).

This sequence belongs to the universal ribosomal protein uL10 family. In terms of assembly, part of the ribosomal stalk of the 50S ribosomal subunit. The N-terminus interacts with L11 and the large rRNA to form the base of the stalk. The C-terminus forms an elongated spine to which L12 dimers bind in a sequential fashion forming a multimeric L10(L12)X complex.

Functionally, forms part of the ribosomal stalk, playing a central role in the interaction of the ribosome with GTP-bound translation factors. This is Large ribosomal subunit protein uL10 from Burkholderia cenocepacia (strain HI2424).